Reading from the N-terminus, the 319-residue chain is Phospho-N-acetylmuramoyl-pentapeptide-transferase (319 aa).

10 consecutive transmembrane segments (helical) span residues 5-25, 51-71, 79-99, 116-136, 149-169, 172-192, 197-217, 224-244, 252-272, and 299-319; these read LIPF…FIGF, TMGG…VLIW, TWIL…DDGI, LGQI…HFAF, SFLF…AVNL, GLDG…AWIA, NWVI…FFIF, IFMG…VSIF, LLIG…VISF, and VDIV…IIWG.

The protein belongs to the glycosyltransferase 4 family. MraY subfamily. Requires Mg(2+) as cofactor.

The protein localises to the cell membrane. It catalyses the reaction UDP-N-acetyl-alpha-D-muramoyl-L-alanyl-gamma-D-glutamyl-L-lysyl-D-alanyl-D-alanine + di-trans,octa-cis-undecaprenyl phosphate = Mur2Ac(oyl-L-Ala-gamma-D-Glu-L-Lys-D-Ala-D-Ala)-di-trans,octa-cis-undecaprenyl diphosphate + UMP. The protein operates within cell wall biogenesis; peptidoglycan biosynthesis. Catalyzes the initial step of the lipid cycle reactions in the biosynthesis of the cell wall peptidoglycan: transfers peptidoglycan precursor phospho-MurNAc-pentapeptide from UDP-MurNAc-pentapeptide onto the lipid carrier undecaprenyl phosphate, yielding undecaprenyl-pyrophosphoryl-MurNAc-pentapeptide, known as lipid I. This chain is Phospho-N-acetylmuramoyl-pentapeptide-transferase, found in Lactobacillus gasseri (strain ATCC 33323 / DSM 20243 / BCRC 14619 / CIP 102991 / JCM 1131 / KCTC 3163 / NCIMB 11718 / NCTC 13722 / AM63).